The chain runs to 443 residues: Xaa-Pro dipeptidase (443 aa).

Mn(2+) contacts are provided by Asp-246, Asp-257, His-339, Glu-384, and Glu-423.

Belongs to the peptidase M24B family. Bacterial-type prolidase subfamily. It depends on Mn(2+) as a cofactor.

The enzyme catalyses Xaa-L-Pro dipeptide + H2O = an L-alpha-amino acid + L-proline. Splits dipeptides with a prolyl residue in the C-terminal position. In Escherichia coli O7:K1 (strain IAI39 / ExPEC), this protein is Xaa-Pro dipeptidase.